The following is a 77-amino-acid chain: NAD(P)H-quinone oxidoreductase subunit L (77 aa).

The next 2 membrane-spanning stretches (helical) occupy residues 12–32 (FVAY…ILFY) and 47–67 (LGVY…SPFL).

The protein belongs to the complex I NdhL subunit family. As to quaternary structure, NDH-1 can be composed of about 15 different subunits; different subcomplexes with different compositions have been identified which probably have different functions.

Its subcellular location is the cellular thylakoid membrane. The catalysed reaction is a plastoquinone + NADH + (n+1) H(+)(in) = a plastoquinol + NAD(+) + n H(+)(out). It carries out the reaction a plastoquinone + NADPH + (n+1) H(+)(in) = a plastoquinol + NADP(+) + n H(+)(out). In terms of biological role, NDH-1 shuttles electrons from an unknown electron donor, via FMN and iron-sulfur (Fe-S) centers, to quinones in the respiratory and/or the photosynthetic chain. The immediate electron acceptor for the enzyme in this species is believed to be plastoquinone. Couples the redox reaction to proton translocation, and thus conserves the redox energy in a proton gradient. Cyanobacterial NDH-1 also plays a role in inorganic carbon-concentration. This chain is NAD(P)H-quinone oxidoreductase subunit L, found in Prochlorococcus marinus (strain MIT 9515).